Here is a 498-residue protein sequence, read N- to C-terminus: ATP synthase subunit alpha 1 (498 aa).

The protein belongs to the ATPase alpha/beta chains family. As to quaternary structure, F-type ATPases have 2 components, CF(1) - the catalytic core - and CF(0) - the membrane proton channel. CF(1) has five subunits: alpha(3), beta(3), gamma(1), delta(1), epsilon(1). CF(0) has three main subunits: a(1), b(2) and c(9-12). The alpha and beta chains form an alternating ring which encloses part of the gamma chain. CF(1) is attached to CF(0) by a central stalk formed by the gamma and epsilon chains, while a peripheral stalk is formed by the delta and b chains.

The protein resides in the cell membrane. It catalyses the reaction ATP + H2O + 4 H(+)(in) = ADP + phosphate + 5 H(+)(out). Its function is as follows. Produces ATP from ADP in the presence of a proton gradient across the membrane. The alpha chain is a regulatory subunit. The polypeptide is ATP synthase subunit alpha 1 (Listeria monocytogenes serotype 4b (strain F2365)).